We begin with the raw amino-acid sequence, 570 residues long: Formate--tetrahydrofolate ligase (570 aa).

Residue 65–72 (TPFGEGKT) participates in ATP binding.

Belongs to the formate--tetrahydrofolate ligase family.

It carries out the reaction (6S)-5,6,7,8-tetrahydrofolate + formate + ATP = (6R)-10-formyltetrahydrofolate + ADP + phosphate. It participates in one-carbon metabolism; tetrahydrofolate interconversion. This chain is Formate--tetrahydrofolate ligase, found in Shewanella sediminis (strain HAW-EB3).